Reading from the N-terminus, the 307-residue chain is Aspartate carbamoyltransferase catalytic subunit (307 aa).

Carbamoyl phosphate-binding residues include Arg54 and Thr55. Lys83 lines the L-aspartate pocket. Residues Arg104, His132, and Gln135 each contribute to the carbamoyl phosphate site. 2 residues coordinate L-aspartate: Arg165 and Arg228. The carbamoyl phosphate site is built by Leu267 and Pro268.

This sequence belongs to the aspartate/ornithine carbamoyltransferase superfamily. ATCase family. As to quaternary structure, heterododecamer (2C3:3R2) of six catalytic PyrB chains organized as two trimers (C3), and six regulatory PyrI chains organized as three dimers (R2).

It catalyses the reaction carbamoyl phosphate + L-aspartate = N-carbamoyl-L-aspartate + phosphate + H(+). It participates in pyrimidine metabolism; UMP biosynthesis via de novo pathway; (S)-dihydroorotate from bicarbonate: step 2/3. Its function is as follows. Catalyzes the condensation of carbamoyl phosphate and aspartate to form carbamoyl aspartate and inorganic phosphate, the committed step in the de novo pyrimidine nucleotide biosynthesis pathway. This Clostridium botulinum (strain ATCC 19397 / Type A) protein is Aspartate carbamoyltransferase catalytic subunit.